Reading from the N-terminus, the 1103-residue chain is MSQSKDKKKFVGGGGGGGGNNSGGGGYGSPKHNNNNNNRNSSNNKSPHQSHHNQQHHQQQQQQQQQQQQQQQQPFDSLTAMKERTVFMSMSLVGQNVSVTLKNGDVYEGILHTTSTSTGSSGGGWGVALKMARKKDTNNRVITTLPLPLVIIEAKDFLQITATGVVLDHYRDSFMNRDQQSFITDTELSGFDGNLKERELTPWTPDPSVGESLDDFAANSEAKKPANWDQFETNEKLFGVRTTYEEEIYTTRLDRDSEFYKINQSVAEKKAQEIENEKSGNIHLLEERGFVEGADYDEEERYSSVVRKGLLPTSTTSTTTSPPTQNPTPSSSVYIPPSKRNNNNNTPSTPSVTSPPIVDKKHQQTHQDKKQTQQQQQQQQQQQQQQQQQQQQQQQQQQQQQTQPTTTATATASTSTSTTTTTNESPSSSSTSSTPSTPSTPKNITTTTATTSTNNTPTATNTNVNSPLGDRESPTISKLRLHQSTIDQDVMGSPRENLSPRSVAYTRYRQILSEPTNKSMNKSGSNISTTPVNGSGNVGPNGTPLLSSVHSDQAPKSPVPTIVSNHGLVKALSLELATPTVPEKFVNDFNNFKLKINNVDRGSETQGLKSFSSNLVIKSKSRPGSPLIGSGSPRPTPTQLSLSGSSTSTNTSTTSPPTTNTTTTTTTATNSTTPSTTEDDKSTTTPITTTILTENKSDDKEKEKEKEKEKVDEKEKEKEKEKSDEKDKDQSSTLVEKKDESSSSSNTTTTTTNTTNNNNNNTTTVTKLSKLKLNPNAKEFVPVVVNKPQPSFKSTTESNTDSVTPINEIYYDSMRKRQLQPESPDQVSLYWVDPFYPRYEEDPYAAAYQMRAHHHMVGHQPPPQLQFNPQFYSQQGHPQLQPHHHMVPPQLQQVPPGVNVHTMKPPGSLQPGGGGVVQPQGIVQPQGIVQPQGGVVQPSAGGAPKTMYQQQQQQQQQTGQPGGPMGVQRGGHLPPQQQPQQQQQQPPPQFIQGIPPGANLVISNGPPNQPFVFQGAHPPYAVPHPQYPMPPQGIQGGNKRFYQPPPQGYPQVQPMIIPQQGQVVSQNSPQQDSPSNRLNQQVPPYSYMTHPPRGYHPNENQYH.

Positions 1–10 are enriched in basic residues; the sequence is MSQSKDKKKF. A disordered region spans residues 1–75; that stretch reads MSQSKDKKKF…QQQQQQQQPF (75 aa). Positions 11-28 are enriched in gly residues; it reads VGGGGGGGGNNSGGGGYG. Low complexity-rich tracts occupy residues 33 to 44 and 56 to 73; these read NNNNNNRNSSNN and HHQQ…QQQQ. Residues 84–166 form the Sm domain; the sequence is RTVFMSMSLV…FLQITATGVV (83 aa). Residues 258–287 adopt a coiled-coil conformation; sequence EFYKINQSVAEKKAQEIENEKSGNIHLLEE. Disordered stretches follow at residues 305–474, 516–557, 615–763, 901–920, and 930–1103; these read VVRK…RESP, TNKS…APKS, LVIK…NNTT, HTMK…VQPQ, and QPQG…NQYH. Low complexity predominate over residues 312–356; that stretch reads PTSTTSTTTSPPTQNPTPSSSVYIPPSKRNNNNNTPSTPSVTSPP. The segment covering 358–371 has biased composition (basic and acidic residues); the sequence is VDKKHQQTHQDKKQ. A coiled-coil region spans residues 366-403; that stretch reads HQDKKQTQQQQQQQQQQQQQQQQQQQQQQQQQQQQQTQ. Low complexity predominate over residues 372–463; the sequence is TQQQQQQQQQ…NNTPTATNTN (92 aa). Residues 516–529 show a composition bias toward polar residues; that stretch reads TNKSMNKSGSNIST. Composition is skewed to low complexity over residues 530 to 544, 637 to 676, and 683 to 694; these read TPVN…NGTP, PTQL…TPST, and TTTPITTTILTE. Positions 691-730 form a coiled coil; it reads ILTENKSDDKEKEKEKEKEKVDEKEKEKEKEKSDEKDKDQ. Over residues 695–741 the composition is skewed to basic and acidic residues; sequence NKSDDKEKEKEKEKEKVDEKEKEKEKEKSDEKDKDQSSTLVEKKDES. Residues 742-763 are compositionally biased toward low complexity; that stretch reads SSSSNTTTTTTNTTNNNNNNTT. The segment covering 930 to 957 has biased composition (low complexity); it reads QPQGGVVQPSAGGAPKTMYQQQQQQQQQ. Residues 960–969 show a composition bias toward gly residues; it reads QPGGPMGVQR. Over residues 974–984 the composition is skewed to low complexity; the sequence is PPQQQPQQQQQ. Over residues 1020 to 1031 the composition is skewed to pro residues; the sequence is YAVPHPQYPMPP. Positions 1062 to 1076 are enriched in low complexity; that stretch reads QVVSQNSPQQDSPSN.

Belongs to the ataxin-2 family.

The sequence is that of Ataxin-2 homolog (atxn2) from Dictyostelium discoideum (Social amoeba).